We begin with the raw amino-acid sequence, 176 residues long: Ribosome rescue factor SmrB (176 aa).

Positions 98 to 173 constitute a Smr domain; it reads LDLHGLNQYQ…NDAAIMVIIE (76 aa).

This sequence belongs to the SmrB family. Associates with collided ribosomes, but not with correctly translating polysomes.

Functionally, acts as a ribosome collision sensor. Detects stalled/collided disomes (pairs of ribosomes where the leading ribosome is stalled and a second ribosome has collided with it) and endonucleolytically cleaves mRNA at the 5' boundary of the stalled ribosome. Stalled/collided disomes form a new interface (primarily via the 30S subunits) that binds SmrB. Cleaved mRNA becomes available for tmRNA ligation, leading to ribosomal subunit dissociation and rescue of stalled ribosomes. This Buchnera aphidicola subsp. Schizaphis graminum (strain Sg) protein is Ribosome rescue factor SmrB.